We begin with the raw amino-acid sequence, 123 residues long: TYMS opposite strand protein (123 aa).

The segment at 57-111 is disordered; that stretch reads MRPLPRRIEVRTKRGPQRPAAPERSPQPRLPPSRHPSRRGPRRHLSGCSAPACRI. Residues 91–101 show a composition bias toward basic residues; that stretch reads HPSRRGPRRHL.

The chain is TYMS opposite strand protein (TYMSOS) from Homo sapiens (Human).